A 248-amino-acid polypeptide reads, in one-letter code: Protein GrpE (248 aa).

Residues 229 to 248 (AAPKEDTLPAQENQSSPADS) are disordered. A compositionally biased stretch (polar residues) spans 238 to 248 (AQENQSSPADS).

The protein belongs to the GrpE family. Homodimer.

The protein localises to the cytoplasm. In terms of biological role, participates actively in the response to hyperosmotic and heat shock by preventing the aggregation of stress-denatured proteins, in association with DnaK and GrpE. It is the nucleotide exchange factor for DnaK and may function as a thermosensor. Unfolded proteins bind initially to DnaJ; upon interaction with the DnaJ-bound protein, DnaK hydrolyzes its bound ATP, resulting in the formation of a stable complex. GrpE releases ADP from DnaK; ATP binding to DnaK triggers the release of the substrate protein, thus completing the reaction cycle. Several rounds of ATP-dependent interactions between DnaJ, DnaK and GrpE are required for fully efficient folding. The sequence is that of Protein GrpE from Nostoc sp. (strain PCC 7120 / SAG 25.82 / UTEX 2576).